A 434-amino-acid chain; its full sequence is Aspartate--tRNA(Asp/Asn) ligase (434 aa).

Residue glutamate 167 participates in L-aspartate binding. An aspartate region spans residues 189 to 192 (QLFK). Arginine 211 lines the L-aspartate pocket. ATP is bound by residues 211 to 213 (RAE), 219 to 221 (RHL), and glutamate 357. Mg(2+)-binding residues include glutamate 357 and serine 360. Residues serine 360 and arginine 364 each coordinate L-aspartate. ATP is bound at residue 405–408 (GGER).

It belongs to the class-II aminoacyl-tRNA synthetase family. Type 2 subfamily. Homodimer. Requires Mg(2+) as cofactor.

The protein localises to the cytoplasm. It carries out the reaction tRNA(Asx) + L-aspartate + ATP = L-aspartyl-tRNA(Asx) + AMP + diphosphate. Its function is as follows. Aspartyl-tRNA synthetase with relaxed tRNA specificity since it is able to aspartylate not only its cognate tRNA(Asp) but also tRNA(Asn). Reaction proceeds in two steps: L-aspartate is first activated by ATP to form Asp-AMP and then transferred to the acceptor end of tRNA(Asp/Asn). This is Aspartate--tRNA(Asp/Asn) ligase from Haloquadratum walsbyi (strain DSM 16790 / HBSQ001).